A 531-amino-acid polypeptide reads, in one-letter code: Zinc finger CCCH-type with G patch domain-containing protein (531 aa).

The residue at position 1 (Met-1) is an N-acetylmethionine. The segment at 91–133 is disordered; sequence EAPAAARGSGSETVPKAEAGPESAAGGQEEEEGEDEEELSGTK. Residues 107–117 show a composition bias toward low complexity; that stretch reads AEAGPESAAGG. Residues 118–129 are compositionally biased toward acidic residues; that stretch reads QEEEEGEDEEEL. Residues 175–201 form a C3H1-type zinc finger; the sequence is KSLKPCPFFLEGKCRFKENCRFSHGQV. The segment at 267–289 is disordered; it reads PPLRTEATESDSDSDGTGDSSYA. The G-patch domain maps to 333–379; sequence TRGIGSRLLTKMGYEFGKGLGRHAEGRVEPIHAVVLPRGKSLDQCVE. A Phosphoserine modification is found at Ser-373. Disordered regions lie at residues 385–409, 426–446, and 509–531; these read TRVG…GGRP, APGA…DMYH, and RAQE…MTEF. A compositionally biased stretch (low complexity) spans 426-438; that stretch reads APGALEAGAAPAG. A compositionally biased stretch (basic and acidic residues) spans 518 to 531; that stretch reads EQRKADTHKKMTEF.

As to quaternary structure, interacts with CHD4/Mi-2; the interaction is direct. In terms of processing, ubiquitinated in case of infection by HIV-1, leading to its degradation. Ubiquitination is mediated by the CUL4A-RBX1-DDB1-DCAF1/VPRBP complex that is hijacked by HIV-1 via interaction between HIV-1 Vpr and DCAF1/VPRBP. As to expression, widely expressed.

The protein localises to the nucleus. In terms of biological role, transcription repressor that specifically binds the 5'-GGAG[GA]A[GA]A-3' consensus sequence. Represses transcription by recruiting the chromatin multiprotein complex NuRD to target promoters. Negatively regulates expression of EGFR, a gene involved in cell proliferation, survival and migration. Its ability to repress genes of the EGFR pathway suggest it may act as a tumor suppressor. Able to suppress breast carcinogenesis. Its function is as follows. Antagonizes the transcription repression by isoform 1 by competing for the binding of the NuRD complex. Does not bind DNA. This chain is Zinc finger CCCH-type with G patch domain-containing protein (ZGPAT), found in Homo sapiens (Human).